A 114-amino-acid chain; its full sequence is Fluoride-specific ion channel FluC 2 (114 aa).

3 consecutive transmembrane segments (helical) span residues 30–50 (FPVATFLVNVAGCLILGLLSG), 57–77 (TFALLGTGFCGGLTTYSTFAV), and 88–108 (ALPSVVYVVASVAAGLAAAWL). Glycine 67 and threonine 70 together coordinate Na(+).

It belongs to the fluoride channel Fluc/FEX (TC 1.A.43) family.

The protein resides in the cell membrane. The enzyme catalyses fluoride(in) = fluoride(out). Its activity is regulated as follows. Na(+) is not transported, but it plays an essential structural role and its presence is essential for fluoride channel function. Its function is as follows. Fluoride-specific ion channel. Important for reducing fluoride concentration in the cell, thus reducing its toxicity. This is Fluoride-specific ion channel FluC 2 from Rhodococcus jostii (strain RHA1).